The chain runs to 180 residues: Oligoribonuclease (180 aa).

The region spanning 7–170 is the Exonuclease domain; that stretch reads LIWIDLEMTG…DDIRESIAEL (164 aa). The active site involves Tyr-128.

It belongs to the oligoribonuclease family.

Its subcellular location is the cytoplasm. In terms of biological role, 3'-to-5' exoribonuclease specific for small oligoribonucleotides. This is Oligoribonuclease from Pseudomonas paraeruginosa (strain DSM 24068 / PA7) (Pseudomonas aeruginosa (strain PA7)).